The primary structure comprises 3433 residues: Genome polyprotein (3433 aa).

Residues 2 to 15 (SKKPGGPGKSRAVN) are interaction with host EXOC1. Over 2 to 105 (SKKPGGPGKS…NRRSSKQKKR (104 aa)) the chain is Cytoplasmic. Residues 37–72 (LIDGRGPTRFVLALLAFFRFTAIAPTRAVLDRWRSV) are hydrophobic; homodimerization of capsid protein C. A propeptide spans 106-123 (GGKTGIAFMIGLIAGVGA) (ER anchor for the capsid protein C, removed in mature form by serine protease NS3). Residues 106 to 126 (GGKTGIAFMIGLIAGVGAVTL) form a helical membrane-spanning segment. Residues 127-248 (SNFQGKVMMT…KATRYLVKTE (122 aa)) are Extracellular-facing. N-linked (GlcNAc...) asparagine; by host glycosylation occurs at Asn-138. Residues 249–269 (SWILRNPGYALVAAVIGWMLG) form a helical membrane-spanning segment. Topologically, residues 270–273 (SNTM) are cytoplasmic. The helical transmembrane segment at 274–290 (QRVVFAVLLLLVAPAYS) threads the bilayer. Residues 291–743 (FNCLGMSNRD…QVFGGAFRSL (453 aa)) are Extracellular-facing. Disulfide bonds link Cys-293/Cys-320, Cys-350/Cys-406, Cys-364/Cys-395, and Cys-382/Cys-411. The tract at residues 388-401 (DRGWGNGCGLFGKG) is fusion peptide. N-linked (GlcNAc...) asparagine; by host glycosylation occurs at Asn-444. Cystine bridges form between Cys-480-Cys-578 and Cys-595-Cys-626. Residues 744-764 (FGGMSWITQGLLGALLLWMGI) form a helical membrane-spanning segment. Residues 765-770 (NARDRS) lie on the Cytoplasmic side of the membrane. The chain crosses the membrane as a helical span at residues 771 to 791 (IALTFLAVGGVLLFLSVNVHA). Over 792 to 1216 (DTGCAIDISR…AFAESNSGGD (425 aa)) the chain is Extracellular. 2 cysteine pairs are disulfide-bonded: Cys-795-Cys-806 and Cys-846-Cys-934. 3 N-linked (GlcNAc...) asparagine; by host glycosylation sites follow: Asn-921, Asn-966, and Asn-998. 4 disulfides stabilise this stretch: Cys-970-Cys-1014, Cys-1071-Cys-1120, Cys-1082-Cys-1103, and Cys-1104-Cys-1107. The helical transmembrane segment at 1217–1237 (VVHLALMATFKIQPVFMVASF) threads the bilayer. The Cytoplasmic segment spans residues 1238–1247 (LKARWTNQEN). A helical transmembrane segment spans residues 1248–1268 (ILLMLAAAFFQMAYYDARQIL). The Lumenal segment spans residues 1269–1288 (LWEMPDVLNSLAVAWMILRA). The chain crosses the membrane as a helical span at residues 1289–1309 (ITFTTTSNVVVPLLALLTPGL). Residues 1310–1316 (RCLNLDV) lie on the Cytoplasmic side of the membrane. The chain crosses the membrane as a helical span at residues 1317-1335 (YRILLLMVGIGSLIREKRS). At 1336 to 1345 (AAAKKKGASL) the chain is on the lumenal side. A helical transmembrane segment spans residues 1346–1366 (LCLALASTGFFNPMILAAGLV). Over 1367–1375 (ACDPNRKRG) the chain is Cytoplasmic. A helical membrane pass occupies residues 1376–1396 (WPATEVMTAVGLMFAIVGGLA). Residues 1397-1399 (ELD) are Lumenal-facing. The helical transmembrane segment at 1400–1420 (IDSMAIPMTIAGLMFAAFVIS) threads the bilayer. Residues 1421 to 1477 (GKSTDMWIERTADISWEGDAEITGSSERVDVRLDDDGNFQLMNDPGAPWKIWMLRMA) are Cytoplasmic-facing. The interval 1428–1467 (IERTADISWEGDAEITGSSERVDVRLDDDGNFQLMNDPGA) is interacts with and activates NS3 protease. Positions 1478 to 1498 (CLAISAYTPWAILPSVVGFWI) form an intramembrane region, helical. The Cytoplasmic segment spans residues 1499–2174 (TLQYTKRGGV…RMALEELPDA (676 aa)). Residues 1506-1683 (GGVLWDTPSP…ERMDEPVPAG (178 aa)) enclose the Peptidase S7 domain. Catalysis depends on charge relay system; for serine protease NS3 activity residues His-1556, Asp-1580, and Ser-1640. The region spanning 1686-1842 (PEMLRKKQIT…ESNAPISDLQ (157 aa)) is the Helicase ATP-binding domain. Residues 1690 to 1693 (RKKQ) are important for RNA-binding. An ATP-binding site is contributed by 1699–1706 (LHPGAGKT). Positions 1790-1793 (DEAH) match the DEAH box motif. The Helicase C-terminal domain maps to 1853 to 2018 (GYEWITEYIG…GLIAQFYQPE (166 aa)). Lys-1894 is subject to N6-acetyllysine; by host. Positions 2169–2173 (EELPD) are regulates the ATPase activity of NS3 helicase. A helical membrane pass occupies residues 2175–2195 (LQTIALIALLSVMTMGVFFLL). The Lumenal portion of the chain corresponds to 2196–2200 (MQRKG). The helical intramembrane region spans 2201–2221 (IGKIGLGGVVLGAATFFCWMA). Position 2222 (Glu-2222) is a topological domain, lumenal. The helical transmembrane segment at 2223 to 2243 (VPGTKIAGMLLLSLLLMIVLI) threads the bilayer. The Cytoplasmic segment spans residues 2244 to 2258 (PEPEKQRSQTDNQLA). Residues 2259–2273 (VFLICVLTLVGAVAA) form a helical membrane-spanning segment. The Lumenal portion of the chain corresponds to 2274–2312 (NEMGWLDKTKSDISGLFGQRIETKENFSIGEFLLDLRPA). Positions 2313-2333 (TAWSLYAVTTAVLTPLLKHLI) form an intramembrane region, helical. At 2334 to 2380 (TSDYITTSLTSINVQASALFTLARGFPFVDVGVSALLLAAGCWGQVT) the chain is on the lumenal side. The helical transmembrane segment at 2381–2401 (LTVTVTSATLLFCHYAYMVPG) threads the bilayer. At 2402–2444 (WQAEAMRSAQRRTAAGIMKNAVVDGIVATDVPELERTTPIMQK) the chain is on the cytoplasmic side. Residues 2445 to 2465 (KVGQVMLILVSLAALVVNPSV) traverse the membrane as a helical segment. Over 2466–2470 (KTVRE) the chain is Lumenal. A helical membrane pass occupies residues 2471–2491 (AGILITAAAVTLWENGASSVW). Over 2492-3433 (NATTAIGLCH…DTTLVEDTVL (942 aa)) the chain is Cytoplasmic. An mRNA cap 0-1 NS5-type MT domain is found at 2529–2794 (GGAKGRTLGE…DVNLGSGTRA (266 aa)). Ser-2584 serves as a coordination point for S-adenosyl-L-methionine. Position 2584 is a phosphoserine (Ser-2584). The active-site For 2'-O-MTase activity is Lys-2589. Gly-2614, Trp-2615, Thr-2632, Lys-2633, Asp-2659, and Val-2660 together coordinate S-adenosyl-L-methionine. Residue Asp-2674 is the For 2'-O-MTase activity of the active site. Ile-2675 lines the S-adenosyl-L-methionine pocket. Active-site for 2'-O-MTase activity residues include Lys-2710 and Glu-2746. Position 2748 (Tyr-2748) interacts with S-adenosyl-L-methionine. Residues 2917–2919 (REK) carry the Nuclear localization signal motif. 4 residues coordinate Zn(2+): Glu-2968, His-2972, Cys-2977, and Cys-2980. Positions 3058–3210 (GRIYADDTAG…KPLDDRFATS (153 aa)) constitute a RdRp catalytic domain. The Zn(2+) site is built by His-3245, Cys-3261, and Cys-3380. A PDZ-binding motif is present at residues 3431 to 3433 (TVL).

In the N-terminal section; belongs to the class I-like SAM-binding methyltransferase superfamily. mRNA cap 0-1 NS5-type methyltransferase family. Homodimer; further assembles as a homotetramer. Interacts (via N-terminus) with host EXOC1 (via C-terminus); this interaction results in EXOC1 degradation through the proteasome degradation pathway. In terms of assembly, forms heterodimers with envelope protein E in the endoplasmic reticulum and Golgi. As to quaternary structure, homodimer; in the endoplasmic reticulum and Golgi. Interacts with protein prM. Interacts with non-structural protein 1. Homodimer; Homohexamer when secreted. Interacts with envelope protein E. NS1 interacts with NS4B. Interacts with host complement protein CFH; this interaction leads to the degradation of C3. In terms of assembly, interacts (via N-terminus) with serine protease NS3. As to quaternary structure, forms a heterodimer with serine protease NS3. May form homooligomers. Forms a heterodimer with NS2B. Interacts with non-structural protein 2A (via N-terminus). Interacts with NS4B. Interacts with unphosphorylated RNA-directed RNA polymerase NS5; this interaction stimulates RNA-directed RNA polymerase NS5 guanylyltransferase activity. In terms of assembly, interacts with Serine protease/Helicase NS3. Interacts with NS1. As to quaternary structure, homodimer. Interacts with host STAT2; this interaction inhibits the phosphorylation of the latter, and, when all viral proteins are present (polyprotein), targets STAT2 for degradation. Interacts with serine protease NS3. Post-translationally, specific enzymatic cleavages in vivo yield mature proteins. Cleavages in the lumen of endoplasmic reticulum are performed by host signal peptidase, whereas cleavages in the cytoplasmic side are performed by serine protease NS3. Signal cleavage at the 2K-4B site requires a prior NS3 protease-mediated cleavage at the 4A-2K site. In terms of processing, cleaved in post-Golgi vesicles by a host furin, releasing the mature small envelope protein M, and peptide pr. This cleavage is incomplete as up to 30% of viral particles still carry uncleaved prM. N-glycosylated. Post-translationally, N-glycosylated. The excreted form is glycosylated and this is required for efficient secretion of the protein from infected cells. In terms of processing, acetylated by host KAT5. Acetylation modulates NS3 RNA-binding and unwinding activities and plays an important positive role for viral replication. Phosphorylated on serines residues. This phosphorylation may trigger NS5 nuclear localization.

The protein resides in the virion. The protein localises to the host nucleus. It is found in the host cytoplasm. It localises to the host perinuclear region. Its subcellular location is the secreted. The protein resides in the virion membrane. The protein localises to the host endoplasmic reticulum membrane. The catalysed reaction is Selective hydrolysis of -Xaa-Xaa-|-Yaa- bonds in which each of the Xaa can be either Arg or Lys and Yaa can be either Ser or Ala.. It catalyses the reaction RNA(n) + a ribonucleoside 5'-triphosphate = RNA(n+1) + diphosphate. It carries out the reaction a ribonucleoside 5'-triphosphate + H2O = a ribonucleoside 5'-diphosphate + phosphate + H(+). The enzyme catalyses ATP + H2O = ADP + phosphate + H(+). The catalysed reaction is a 5'-end (5'-triphosphoguanosine)-ribonucleoside in mRNA + S-adenosyl-L-methionine = a 5'-end (N(7)-methyl 5'-triphosphoguanosine)-ribonucleoside in mRNA + S-adenosyl-L-homocysteine. It catalyses the reaction a 5'-end (N(7)-methyl 5'-triphosphoguanosine)-ribonucleoside in mRNA + S-adenosyl-L-methionine = a 5'-end (N(7)-methyl 5'-triphosphoguanosine)-(2'-O-methyl-ribonucleoside) in mRNA + S-adenosyl-L-homocysteine + H(+). Functionally, plays a role in virus budding by binding to the cell membrane and gathering the viral RNA into a nucleocapsid that forms the core of a mature virus particle. During virus entry, may induce genome penetration into the host cytoplasm after hemifusion induced by the surface proteins. Can migrate to the cell nucleus where it modulates host functions. Overcomes the anti-viral effects of host EXOC1 by sequestering and degrading the latter through the proteasome degradation pathway. In terms of biological role, inhibits RNA silencing by interfering with host Dicer. Prevents premature fusion activity of envelope proteins in trans-Golgi by binding to envelope protein E at pH6.0. After virion release in extracellular space, gets dissociated from E dimers. Its function is as follows. Acts as a chaperone for envelope protein E during intracellular virion assembly by masking and inactivating envelope protein E fusion peptide. prM is the only viral peptide matured by host furin in the trans-Golgi network probably to avoid catastrophic activation of the viral fusion activity in acidic Golgi compartment prior to virion release. prM-E cleavage is inefficient, and many virions are only partially matured. These uncleaved prM would play a role in immune evasion. Functionally, may play a role in virus budding. Exerts cytotoxic effects by activating a mitochondrial apoptotic pathway through M ectodomain. May display a viroporin activity. In terms of biological role, binds to host cell surface receptor and mediates fusion between viral and cellular membranes. Envelope protein is synthesized in the endoplasmic reticulum in the form of heterodimer with protein prM. They play a role in virion budding in the ER, and the newly formed immature particle is covered with 60 spikes composed of heterodimer between precursor prM and envelope protein E. The virion is transported to the Golgi apparatus where the low pH causes dissociation of PrM-E heterodimers and formation of E homodimers. prM-E cleavage is inefficient, and many virions are only partially matured. These uncleaved prM would play a role in immune evasion. Involved in immune evasion, pathogenesis and viral replication. Once cleaved off the polyprotein, is targeted to three destinations: the viral replication cycle, the plasma membrane and the extracellular compartment. Essential for viral replication. Required for formation of the replication complex and recruitment of other non-structural proteins to the ER-derived membrane structures. Excreted as a hexameric lipoparticle that plays a role against host immune response. Antagonizing the complement function. Binds to the host macrophages and dendritic cells. Inhibits signal transduction originating from Toll-like receptor 3 (TLR3). Its function is as follows. Component of the viral RNA replication complex that functions in virion assembly and antagonizes the host alpha/beta interferon antiviral response. Inhibits STAT2 translocation in the nucleus after IFN-alpha treatment. Functionally, required cofactor for the serine protease function of NS3. May have membrane-destabilizing activity and form viroporins. Inhibits STAT2 translocation in the nucleus after IFN-alpha treatment. In terms of biological role, displays three enzymatic activities: serine protease, NTPase and RNA helicase. NS3 serine protease, in association with NS2B, performs its autocleavage and cleaves the polyprotein at dibasic sites in the cytoplasm: C-prM, NS2A-NS2B, NS2B-NS3, NS3-NS4A, NS4A-2K and NS4B-NS5. NS3 RNA helicase binds RNA and unwinds dsRNA in the 3' to 5' direction. NS3 supports the separation of RNA daughter and template strands during viral replication. The helicase part is involved in the inhibition of phosphorylation of host STAT1, and thereby inhibition of host type-I IFN signaling. In addition, NS3 assists the initiation of replication by unwinding the RNA secondary structure in the 3' non-translated region (NTR). Inhibits STAT2 translocation in the nucleus after IFN-alpha treatment. Regulates the ATPase activity of the NS3 helicase activity. NS4A allows NS3 helicase to conserve energy during unwinding. Induces host ER membrane rearrangements to provide a compartment where viral replication can take part. Inhibits STAT2 translocation in the nucleus after IFN-alpha treatment. Its function is as follows. Functions as a signal peptide for NS4B and is required for the interferon antagonism activity of the latter. Functionally, induces the formation of ER-derived membrane vesicles where the viral replication takes place. Inhibits interferon (IFN)-induced host STAT1 phosphorylation and nuclear translocation, thereby preventing the establishment of cellular antiviral state by blocking the IFN-alpha/beta pathway. Inhibits STAT2 translocation in the nucleus after IFN-alpha treatment. In terms of biological role, replicates the viral (+) and (-) genome, and performs the capping of genomes in the cytoplasm. NS5 methylates viral RNA cap at guanine N-7 and ribose 2'-O positions. Besides its role in genome replication, also prevents the establishment of cellular antiviral state by blocking the interferon-alpha/beta (IFN-alpha/beta) signaling pathway. Inhibits host JAK1 and TYK2 phosphorylation, thereby preventing activation of JAK-STAT signaling pathway. May transcriptionally regulate host genes involved in antiviral response when localized in the nucleus. The protein is Genome polyprotein of Ciconiiformes (storks and others).